The chain runs to 329 residues: 4-hydroxythreonine-4-phosphate dehydrogenase (329 aa).

His136 and Thr137 together coordinate substrate. A divalent metal cation contacts are provided by His166, His211, and His266. 3 residues coordinate substrate: Lys274, Asn283, and Arg292.

The protein belongs to the PdxA family. Homodimer. It depends on Zn(2+) as a cofactor. The cofactor is Mg(2+). Co(2+) is required as a cofactor.

The protein resides in the cytoplasm. The enzyme catalyses 4-(phosphooxy)-L-threonine + NAD(+) = 3-amino-2-oxopropyl phosphate + CO2 + NADH. Its pathway is cofactor biosynthesis; pyridoxine 5'-phosphate biosynthesis; pyridoxine 5'-phosphate from D-erythrose 4-phosphate: step 4/5. Its function is as follows. Catalyzes the NAD(P)-dependent oxidation of 4-(phosphooxy)-L-threonine (HTP) into 2-amino-3-oxo-4-(phosphooxy)butyric acid which spontaneously decarboxylates to form 3-amino-2-oxopropyl phosphate (AHAP). This is 4-hydroxythreonine-4-phosphate dehydrogenase from Escherichia coli O81 (strain ED1a).